The chain runs to 408 residues: LL-diaminopimelate aminotransferase (408 aa).

Substrate is bound by residues Tyr-15 and Gly-42. Pyridoxal 5'-phosphate contacts are provided by residues Tyr-72, 108–109, Tyr-132, Asn-187, Tyr-218, and 246–248; these read SK and SFS. Residues Lys-109, Tyr-132, and Asn-187 each coordinate substrate. At Lys-249 the chain carries N6-(pyridoxal phosphate)lysine. 2 residues coordinate pyridoxal 5'-phosphate: Arg-257 and Asn-292. Substrate-binding residues include Asn-292 and Arg-388.

The protein belongs to the class-I pyridoxal-phosphate-dependent aminotransferase family. LL-diaminopimelate aminotransferase subfamily. As to quaternary structure, homodimer. Pyridoxal 5'-phosphate is required as a cofactor.

The enzyme catalyses (2S,6S)-2,6-diaminopimelate + 2-oxoglutarate = (S)-2,3,4,5-tetrahydrodipicolinate + L-glutamate + H2O + H(+). It participates in amino-acid biosynthesis; L-lysine biosynthesis via DAP pathway; LL-2,6-diaminopimelate from (S)-tetrahydrodipicolinate (aminotransferase route): step 1/1. Involved in the synthesis of meso-diaminopimelate (m-DAP or DL-DAP), required for both lysine and peptidoglycan biosynthesis. Catalyzes the direct conversion of tetrahydrodipicolinate to LL-diaminopimelate. This is LL-diaminopimelate aminotransferase from Prochlorococcus marinus (strain MIT 9312).